The primary structure comprises 116 residues: Ig heavy chain V-A1 region BS-5 (116 aa).

Pyrrolidone carboxylic acid is present on glutamine 1. Positions 1 to 107 (QSVEESGGRL…LVHLAFVDVW (107 aa)) constitute an Ig-like domain.

This chain is Ig heavy chain V-A1 region BS-5, found in Oryctolagus cuniculus (Rabbit).